We begin with the raw amino-acid sequence, 290 residues long: 2-hydroxy-6-oxo-6-(2'-aminophenyl)hexa-2,4-dienoic acid hydrolase (290 aa).

Active-site residues include S114, D233, and H261.

The protein belongs to the DmpD/TodF/XylF esterase family. Homodimer.

It catalyses the reaction (2E,4E)-6-(2-aminophenyl)-2-hydroxy-6-oxohexa-2,4-dienoate + H2O = (2E)-2-hydroxypenta-2,4-dienoate + anthranilate + H(+). It functions in the pathway xenobiotic degradation; carbazole degradation. In terms of biological role, involved in the degradation of carbazole, a toxic N-heterocyclic aromatic compound containing dibenzopyrrole system. Catalyzes the hydrolytic cleavage of a carbon-carbon bond of 2-hydroxy-6-oxo-6-(2'-aminophenyl)hexa-2,4-dienoic acid (HOPDA) to yield anthranilate. CarC is specific for 2-hydroxy-6-oxo-6-phenylhexa-2,4-dienoic acid (6-phenyl-HODA), and has little activity toward 2-hydroxy-6-oxohepta-2,4-dienoic acid and 2-hydroxymuconic semialdehyde. The effect of the presence of an amino group or hydroxyl group at the 2'-position of phenyl moiety of 6-phenyl-HODA on the enzyme activity is found to be small. The chain is 2-hydroxy-6-oxo-6-(2'-aminophenyl)hexa-2,4-dienoic acid hydrolase (carC) from Metapseudomonas resinovorans (Pseudomonas resinovorans).